We begin with the raw amino-acid sequence, 150 residues long: SsrA-binding protein (150 aa).

It belongs to the SmpB family.

The protein localises to the cytoplasm. Required for rescue of stalled ribosomes mediated by trans-translation. Binds to transfer-messenger RNA (tmRNA), required for stable association of tmRNA with ribosomes. tmRNA and SmpB together mimic tRNA shape, replacing the anticodon stem-loop with SmpB. tmRNA is encoded by the ssrA gene; the 2 termini fold to resemble tRNA(Ala) and it encodes a 'tag peptide', a short internal open reading frame. During trans-translation Ala-aminoacylated tmRNA acts like a tRNA, entering the A-site of stalled ribosomes, displacing the stalled mRNA. The ribosome then switches to translate the ORF on the tmRNA; the nascent peptide is terminated with the 'tag peptide' encoded by the tmRNA and targeted for degradation. The ribosome is freed to recommence translation, which seems to be the essential function of trans-translation. This Thermotoga maritima (strain ATCC 43589 / DSM 3109 / JCM 10099 / NBRC 100826 / MSB8) protein is SsrA-binding protein.